A 527-amino-acid chain; its full sequence is Berberine bridge enzyme-like 8 (527 aa).

The signal sequence occupies residues 1-20 (MKYALILVLFFVVFIWQSSS). The cysteines at positions 31 and 93 are disulfide-linked. Asn51 and Asn68 each carry an N-linked (GlcNAc...) asparagine glycan. The FAD-binding PCMH-type domain occupies 71–247 (STPKPFLIIA…LAYKINLVEV (177 aa)). A cross-link (6-(S-cysteinyl)-8alpha-(pros-histidyl)-FAD (His-Cys)) is located at residues 108 to 172 (HDYDGLSYVT…KTLAYPAGIC (65 aa)). N-linked (GlcNAc...) asparagine glycosylation is found at Asn250, Asn263, and Asn292.

This sequence belongs to the oxygen-dependent FAD-linked oxidoreductase family. The cofactor is FAD. In terms of processing, the FAD cofactor is bound via a bicovalent 6-S-cysteinyl, 8alpha-N1-histidyl FAD linkage.

The protein localises to the secreted. Its subcellular location is the cell wall. In Arabidopsis thaliana (Mouse-ear cress), this protein is Berberine bridge enzyme-like 8.